The following is a 666-amino-acid chain: Protein scarlet (666 aa).

Residues 1 to 417 are Cytoplasmic-facing; sequence MSDSDSKRID…TIQWLRFIQK (417 aa). Positions 26–55 are disordered; that stretch reads PVGSTIEVPSLDSTPKLSKRNSSERSLPLR. In terms of domain architecture, ABC transporter spans 69–316; it reads LVWRDLCVYT…FANHGYYCPE (248 aa). Residue 108–115 participates in ATP binding; sequence GSSGSGKT. A helical transmembrane segment spans residues 418–438; it reads IAMAFIIGACFAGTTEPSQLG. Over 439–444 the chain is Extracellular; sequence VQAVQG. Residues 445-465 traverse the membrane as a helical segment; it reads ALFIMISENTYHPMYSVLNLF. The Cytoplasmic segment spans residues 466–490; that stretch reads PQGFPLFMRETRSGLYSTGQYYAAN. The chain crosses the membrane as a helical span at residues 491 to 511; it reads ILALLPGMIIEPLIFVIICYW. Residues 512–518 are Extracellular-facing; the sequence is LTGLRST. Residues 519-539 traverse the membrane as a helical segment; the sequence is FYAFGVTAMCVVLVMNVATAC. Topologically, residues 540-551 are cytoplasmic; the sequence is GCFFSTAFNSVP. The chain crosses the membrane as a helical span at residues 552-572; that stretch reads LAMAYLVPLDYIFMITSGIFI. At 573–639 the chain is on the extracellular side; the sequence is QVNSLPVAFW…YSFNESNVYR (67 aa). Residues Asn-607 and Asn-633 are each glycosylated (N-linked (GlcNAc...) asparagine). A helical membrane pass occupies residues 640 to 660; that stretch reads NLLAMVGLYFGFHLLGYYCLW. The Cytoplasmic segment spans residues 661–666; the sequence is RRARKL.

Belongs to the ABC transporter superfamily. ABCG family. Eye pigment precursor importer (TC 3.A.1.204) subfamily. As to quaternary structure, may form a heterodimer with w/white. In terms of tissue distribution, expressed in the eye, specifically in primary pigment cells, secondary pigment cells and retinula cells (at protein level).

The protein localises to the cytoplasmic vesicle membrane. It carries out the reaction L-kynurenine(out) + ATP + H2O = L-kynurenine(in) + ADP + phosphate + H(+). In terms of biological role, ATP-dependent transporter of the ATP-binding cassette (ABC) family which transports various molecules including bioamines, neurotransmitters and metabolic intermediates. In the eye and probably in association with w/white, required for the transport of the eye brown pigment precursors, kynurenine and probably tryptophan, into pigment cell granules. In Malpighian tubules and pupal eyes, involved in kynurenine transport. Probably in association with w/white, plays a role in zinc storage granule biogenesis in Malpighian tubule principal epithelial cells. The polypeptide is Protein scarlet (Drosophila melanogaster (Fruit fly)).